A 410-amino-acid polypeptide reads, in one-letter code: LL-diaminopimelate aminotransferase (410 aa).

Positions 15 and 42 each coordinate substrate. Pyridoxal 5'-phosphate contacts are provided by residues tyrosine 72, 108–109, tyrosine 132, asparagine 187, tyrosine 218, and 246–248; these read SK and SFS. Residues lysine 109, tyrosine 132, and asparagine 187 each contribute to the substrate site. Lysine 249 is modified (N6-(pyridoxal phosphate)lysine). 2 residues coordinate pyridoxal 5'-phosphate: arginine 257 and asparagine 292. 2 residues coordinate substrate: asparagine 292 and arginine 388.

The protein belongs to the class-I pyridoxal-phosphate-dependent aminotransferase family. LL-diaminopimelate aminotransferase subfamily. In terms of assembly, homodimer. The cofactor is pyridoxal 5'-phosphate.

It carries out the reaction (2S,6S)-2,6-diaminopimelate + 2-oxoglutarate = (S)-2,3,4,5-tetrahydrodipicolinate + L-glutamate + H2O + H(+). It participates in amino-acid biosynthesis; L-lysine biosynthesis via DAP pathway; LL-2,6-diaminopimelate from (S)-tetrahydrodipicolinate (aminotransferase route): step 1/1. Functionally, involved in the synthesis of meso-diaminopimelate (m-DAP or DL-DAP), required for both lysine and peptidoglycan biosynthesis. Catalyzes the direct conversion of tetrahydrodipicolinate to LL-diaminopimelate. The protein is LL-diaminopimelate aminotransferase of Syntrophotalea carbinolica (strain DSM 2380 / NBRC 103641 / GraBd1) (Pelobacter carbinolicus).